Reading from the N-terminus, the 422-residue chain is Serine protease HTRA2, mitochondrial (422 aa).

The transit peptide at 1-17 directs the protein to the mitochondrion; sequence MALRGSHRLEVIFKRCI. A propeptide spanning residues 18 to 74 is cleaved from the precursor; sequence ASPVLHSQAGNRRSSQLAIKGVDPNSNGNSGQYQQNGEHKEKGWRRLVRFFVPFSLG. The disordered stretch occupies residues 28–55; sequence NRRSSQLAIKGVDPNSNGNSGQYQQNGE. A compositionally biased stretch (low complexity) spans 42–53; the sequence is NSNGNSGQYQQN. A helical transmembrane segment spans residues 64–82; that stretch reads LVRFFVPFSLGAAVSAAII. 2 consecutive short sequence motifs (IAP-binding) follow at residues 75-78 and 94-97; these read AAVS and SKMT. The serine protease stretch occupies residues 139–302; that stretch reads SNGSGFIIEQ…IPIDYVKVFL (164 aa). Active-site charge relay system residues include His-157, Asp-189, and Ser-266. A PDZ domain is found at 325 to 410; it reads MGITMLTLTP…TLDIVILRGV (86 aa).

This sequence belongs to the peptidase S1C family. In terms of assembly, interacts with th/DIAP1 (via BIR 2 domain).

The protein localises to the mitochondrion intermembrane space. Its subcellular location is the mitochondrion membrane. The catalysed reaction is Cleavage of non-polar aliphatic amino-acids at the P1 position, with a preference for Val, Ile and Met. At the P2 and P3 positions, Arg is selected most strongly with a secondary preference for other hydrophilic residues.. Serine protease that shows proteolytic activity against a non-specific substrate beta-casein. Promotes or induces cell death either by direct binding to and inhibition of BIRC proteins (also called inhibitor of apoptosis proteins, IAPs), leading to an increase in caspase activity, or by a BIRC inhibition-independent, caspase-independent and serine protease activity-dependent mechanism. Can antagonize antiapoptotic activity of th/Diap1 by directly inducing the degradation of th/Diap1. This is Serine protease HTRA2, mitochondrial from Drosophila sechellia (Fruit fly).